The sequence spans 242 residues: Ubiquinone/menaquinone biosynthesis C-methyltransferase UbiE (242 aa).

S-adenosyl-L-methionine is bound by residues threonine 69, aspartate 87, and 114–115 (NA).

It belongs to the class I-like SAM-binding methyltransferase superfamily. MenG/UbiE family.

The catalysed reaction is a 2-demethylmenaquinol + S-adenosyl-L-methionine = a menaquinol + S-adenosyl-L-homocysteine + H(+). It catalyses the reaction a 2-methoxy-6-(all-trans-polyprenyl)benzene-1,4-diol + S-adenosyl-L-methionine = a 5-methoxy-2-methyl-3-(all-trans-polyprenyl)benzene-1,4-diol + S-adenosyl-L-homocysteine + H(+). The protein operates within quinol/quinone metabolism; menaquinone biosynthesis; menaquinol from 1,4-dihydroxy-2-naphthoate: step 2/2. Its pathway is cofactor biosynthesis; ubiquinone biosynthesis. In terms of biological role, methyltransferase required for the conversion of demethylmenaquinol (DMKH2) to menaquinol (MKH2) and the conversion of 2-polyprenyl-6-methoxy-1,4-benzoquinol (DDMQH2) to 2-polyprenyl-3-methyl-6-methoxy-1,4-benzoquinol (DMQH2). This Zymomonas mobilis subsp. mobilis (strain ATCC 31821 / ZM4 / CP4) protein is Ubiquinone/menaquinone biosynthesis C-methyltransferase UbiE.